The sequence spans 326 residues: Probable oxidoreductase patJ (326 aa).

Residues His-287–Lys-326 are disordered. Polar residues predominate over residues Gly-292–Val-304.

The protein belongs to the oxidoreductase OpS7 family.

Its subcellular location is the vacuole lumen. It localises to the cytoplasmic vesicle lumen. The protein operates within mycotoxin biosynthesis; patulin biosynthesis. Its function is as follows. Probable oxidoreductase; part of the gene cluster that mediates the biosynthesis of patulin, an acetate-derived tetraketide mycotoxin produced by several fungal species that shows antimicrobial properties against several bacteria. PatJ acts with patO in the vacuole to convert gentisyl alcohol to isoepoxydon. The pathway begins with the synthesis of 6-methylsalicylic acid by the polyketide synthase (PKS) patK via condensation of acetate and malonate units. The 6-methylsalicylic acid decarboxylase patG then catalyzes the decarboxylation of 6-methylsalicylic acid to yield m-cresol (also known as 3-methylphenol). These first reactions occur in the cytosol. The intermediate m-cresol is then transported into the endoplasmic reticulum where the cytochrome P450 monooxygenase patH converts it to m-hydroxybenzyl alcohol, which is further converted to gentisyl alcohol by the cytochrome P450 monooxygenase patI. The oxidoreductases patJ and patO further convert gentisyl alcohol to isoepoxydon in the vacuole. PatN catalyzes then the transformation of isoepoxydon into phyllostine. The cluster protein patF is responsible for the conversion from phyllostine to neopatulin whereas the alcohol dehydrogenase patD converts neopatulin to E-ascladiol. The steps between isoepoxydon and E-ascladiol occur in the cytosol, and E-ascladiol is probably secreted to the extracellular space by one of the cluster-specific transporters patC or patM. Finally, the secreted patulin synthase patE catalyzes the conversion of E-ascladiol to patulin. The polypeptide is Probable oxidoreductase patJ (Penicillium expansum (Blue mold rot fungus)).